A 193-amino-acid polypeptide reads, in one-letter code: dCTP deaminase, dUMP-forming (193 aa).

DCTP-binding positions include 107 to 112 (RSSLGR), D125, 133 to 135 (TLE), Q154, and Y168. Catalysis depends on E135, which acts as the Proton donor/acceptor. The disordered stretch occupies residues 169–193 (AESSGKYHGDERPSPSKMHLDFCRG). Residues 173 to 193 (GKYHGDERPSPSKMHLDFCRG) are compositionally biased toward basic and acidic residues.

Belongs to the dCTP deaminase family. As to quaternary structure, homotrimer.

The catalysed reaction is dCTP + 2 H2O = dUMP + NH4(+) + diphosphate. The protein operates within pyrimidine metabolism; dUMP biosynthesis; dUMP from dCTP: step 1/1. Bifunctional enzyme that catalyzes both the deamination of dCTP to dUTP and the hydrolysis of dUTP to dUMP without releasing the toxic dUTP intermediate. This is dCTP deaminase, dUMP-forming from Methanopyrus kandleri (strain AV19 / DSM 6324 / JCM 9639 / NBRC 100938).